A 263-amino-acid polypeptide reads, in one-letter code: Single-stranded DNA-binding protein WHY1, chloroplastic (263 aa).

A chloroplast-targeting transit peptide spans 1-47 (MSQLLSTPLMAVNSNPRFLSSSSVLVTGGFAVKRHGFALKPTTKTVK). Residues 89–94 (KGKAAL) are required for ssDNA binding. Residues 167-180 (KGKSDEGKVRKVLK) carry the Nuclear localization signal motif.

This sequence belongs to the Whirly family. Homotetramer.

It is found in the plastid. It localises to the chloroplast. The protein resides in the nucleus. Single-stranded DNA-binding protein that functions in both chloroplasts and nucleus. In chloroplasts, maintains plastid genome stability by preventing break-induced and short homology-dependent illegitimate recombinations. In nucleus, modulates telomere length homeostasis by inhibiting the action of the telomerase at the extreme termini of chromosomes. Is recruited to a distal element upstream of the kinesin KP1 to mediate the transcriptional repression of KP1. Is required for full salicylic acid-dependent plant disease resistance responses. Can bind double-stranded DNA in vivo. In Arabidopsis thaliana (Mouse-ear cress), this protein is Single-stranded DNA-binding protein WHY1, chloroplastic (WHY1).